The chain runs to 685 residues: Bifunctional diguanylate cyclase/cyclic di-GMP phosphodiesterase MucR (685 aa).

Positions Y6–P199 constitute an MHYT domain. 7 consecutive transmembrane segments (helical) span residues V9–A29, L44–L64, G77–V97, G117–Y137, W141–F161, A175–A195, and G214–V234. The Cytoplasmic segment spans residues S235–A685. The GGDEF domain occupies R293–S425. Positions Q434–A685 constitute an EAL domain. 3',3'-c-di-GMP contacts are provided by Q455, E469, L472, R473, N528, and Q533. E469 is a Mg(2+) binding site. A Mg(2+)-binding site is contributed by N528. The Mg(2+) site is built by E560, D590, and D591. Residue D590 participates in 3',3'-c-di-GMP binding. R614 contributes to the 3',3'-c-di-GMP binding site. Position 647 (E647) interacts with Mg(2+). The 3',3'-c-di-GMP site is built by E650 and F669.

Homodimer. Mg(2+) is required as a cofactor.

It is found in the cell inner membrane. The enzyme catalyses 2 GTP = 3',3'-c-di-GMP + 2 diphosphate. It carries out the reaction 3',3'-c-di-GMP + H2O = 5'-phosphoguanylyl(3'-&gt;5')guanosine + H(+). Functionally, displays both diguanylate cyclase (DGC) and c-di-GMP-specific phosphodiesterase (PDE) activity. Probably modulates DGC and PDE activities, and thus c-di-GMP levels, in a growth mode-dependent manner. May act as a PDE under planktonic growth conditions and as a DGC in biofilms. During biofilm formation, it specifically activates alginate biosynthesis via generation of a localized c-di-GMP pool in the vicinity of the alginate biosynthesis protein Alg44. This is Bifunctional diguanylate cyclase/cyclic di-GMP phosphodiesterase MucR from Pseudomonas aeruginosa (strain ATCC 15692 / DSM 22644 / CIP 104116 / JCM 14847 / LMG 12228 / 1C / PRS 101 / PAO1).